A 103-amino-acid chain; its full sequence is UPF0145 protein Dred_2155 (103 aa).

This sequence belongs to the UPF0145 family.

This chain is UPF0145 protein Dred_2155, found in Desulforamulus reducens (strain ATCC BAA-1160 / DSM 100696 / MI-1) (Desulfotomaculum reducens).